The sequence spans 305 residues: Aspartate carbamoyltransferase catalytic subunit (305 aa).

Carbamoyl phosphate-binding residues include Arg51 and Thr52. L-aspartate is bound at residue Lys79. Positions 101, 129, and 132 each coordinate carbamoyl phosphate. Arg165 and Arg220 together coordinate L-aspartate. Residues Gly258 and Pro259 each contribute to the carbamoyl phosphate site.

The protein belongs to the aspartate/ornithine carbamoyltransferase superfamily. ATCase family. Heterododecamer (2C3:3R2) of six catalytic PyrB chains organized as two trimers (C3), and six regulatory PyrI chains organized as three dimers (R2).

The enzyme catalyses carbamoyl phosphate + L-aspartate = N-carbamoyl-L-aspartate + phosphate + H(+). The protein operates within pyrimidine metabolism; UMP biosynthesis via de novo pathway; (S)-dihydroorotate from bicarbonate: step 2/3. Catalyzes the condensation of carbamoyl phosphate and aspartate to form carbamoyl aspartate and inorganic phosphate, the committed step in the de novo pyrimidine nucleotide biosynthesis pathway. In Rubrobacter xylanophilus (strain DSM 9941 / JCM 11954 / NBRC 16129 / PRD-1), this protein is Aspartate carbamoyltransferase catalytic subunit.